Here is a 134-residue protein sequence, read N- to C-terminus: Large ribosomal subunit protein eL32 (134 aa).

It belongs to the eukaryotic ribosomal protein eL32 family.

This is Large ribosomal subunit protein eL32 (RpL32) from Drosophila affinis (Fruit fly).